The primary structure comprises 258 residues: Ribosomal RNA large subunit methyltransferase E (258 aa).

S-adenosyl-L-methionine contacts are provided by Gly58, Trp60, Asp78, Asp96, and Asp120. Residue Lys160 is the Proton acceptor of the active site.

The protein belongs to the class I-like SAM-binding methyltransferase superfamily. RNA methyltransferase RlmE family.

It is found in the cytoplasm. It catalyses the reaction uridine(2552) in 23S rRNA + S-adenosyl-L-methionine = 2'-O-methyluridine(2552) in 23S rRNA + S-adenosyl-L-homocysteine + H(+). Its function is as follows. Specifically methylates the uridine in position 2552 of 23S rRNA at the 2'-O position of the ribose in the fully assembled 50S ribosomal subunit. In Methanococcus maripaludis (strain DSM 14266 / JCM 13030 / NBRC 101832 / S2 / LL), this protein is Ribosomal RNA large subunit methyltransferase E.